Here is a 153-residue protein sequence, read N- to C-terminus: Vasotocin-neurophysin VT 1 (153 aa).

The first 20 residues, 1-20 (MPYSTFPLLWVLGLLALSSA), serve as a signal peptide directing secretion. A disulfide bridge links cysteine 21 with cysteine 26. Residue glycine 29 is modified to Glycine amide. 7 cysteine pairs are disulfide-bonded: cysteine 41-cysteine 85, cysteine 44-cysteine 58, cysteine 52-cysteine 75, cysteine 59-cysteine 65, cysteine 92-cysteine 104, cysteine 98-cysteine 116, and cysteine 105-cysteine 110.

Belongs to the vasopressin/oxytocin family. In terms of processing, seven disulfide bonds are present in neurophysin.

It localises to the secreted. Its function is as follows. Vasotocin is an antidiuretic hormone. In Oncorhynchus keta (Chum salmon), this protein is Vasotocin-neurophysin VT 1.